The sequence spans 399 residues: Protein HYM1 (399 aa).

A compositionally biased stretch (low complexity) spans 363–382 (VSNNNASSSNVASITSPSSV). The segment at 363–399 (VSNNNASSSNVASITSPSSVMNNQSSILTHSTSPDSR) is disordered. Residues 383–399 (MNNQSSILTHSTSPDSR) are compositionally biased toward polar residues.

Belongs to the Mo25 family.

In Saccharomyces cerevisiae (strain ATCC 204508 / S288c) (Baker's yeast), this protein is Protein HYM1 (HYM1).